A 91-amino-acid chain; its full sequence is Small ribosomal subunit protein bS20 (91 aa).

It belongs to the bacterial ribosomal protein bS20 family.

Functionally, binds directly to 16S ribosomal RNA. This chain is Small ribosomal subunit protein bS20, found in Caulobacter sp. (strain K31).